Consider the following 127-residue polypeptide: Protein chibby homolog 1 (127 aa).

Residues 1–25 form a disordered region; it reads MPLFGSIFSPKKTPPRKSASLSNLH. 2 positions are modified to phosphoserine: S9 and S20. A minimal region for the interaction with PKD2 region spans residues 60-112; that stretch reads VADSVISGGVDRRETQRLRKRNQQLEEENNLLRLKVDILLDMLSETTAESHLK. Positions 68-110 form a coiled coil; that stretch reads GVDRRETQRLRKRNQQLEEENNLLRLKVDILLDMLSETTAESH. The tract at residues 77-98 is leucine-zipper; mediates homodimerization; it reads LRKRNQQLEEENNLLRLKVDIL.

It belongs to the chibby family. Homodimer. Homodimerization is essential for nuclear localization and interaction with KPNA4 but is dispensable for interaction with CTNNB1. Interacts with polycystin-2/PKD2 and GM130. Interacts with the C-terminal region of CTNNB1. Interacts (C-terminus) with TCIM (C-terminus), TCIM competes with CTNNB1 for the interaction with CBY1. Interacts with FAM92A; this interaction facilitates targeting of FAM92A to cilium basal body. Interacts with CIBAR2. Interacts with KPNA4. Found in heart, brain, lung, liver, muscle, kidney and testis. Levels are approximately 3-fold higher in embryonic and adult heart than in lung or liver.

It is found in the nucleus speckle. It localises to the cytoplasm. The protein resides in the cytoskeleton. Its subcellular location is the cilium basal body. The protein localises to the microtubule organizing center. It is found in the centrosome. It localises to the centriole. The protein resides in the golgi apparatus. Its subcellular location is the trans-Golgi network. The protein localises to the cell projection. It is found in the cilium. It localises to the flagellum. The protein resides in the nucleus. Inhibits the Wnt/Wingless pathway by binding to CTNNB1/beta-catenin and inhibiting beta-catenin-mediated transcriptional activation through competition with TCF/LEF transcription factors. Has also been shown to play a role in regulating the intracellular trafficking of polycystin-2/PKD2 and possibly of other intracellular proteins. Promotes adipocyte and cardiomyocyte differentiation. This is Protein chibby homolog 1 (Cby1) from Mus musculus (Mouse).